The following is a 268-amino-acid chain: AN1-type zinc finger protein 1 (268 aa).

The residue at position 2 (A2) is an N-acetylalanine. AN1-type zinc fingers lie at residues 4-52 and 58-106; these read LDIG…VINE and QHTS…IPKP. C10, C15, C25, C28, C33, H36, H42, C44, C64, C69, C79, C82, C87, H90, H96, and C98 together coordinate Zn(2+). Positions 160–260 are ubiquitin-like; sequence QTERIYFQVF…EYLNDEEQFC (101 aa).

As to quaternary structure, associates with the 26S proteasome; this association occurs upon exposure to arsenite and is reduced in the presence of ATP. Interacts (via AN1-type 1 and 2 zinc fingers) with PSMD1; this interaction is increased upon arsenite treatment and occurs in an ATP-independent manner. Interacts with PSMC4. Interacts with PSMA1. Interacts (via its ubiquitin-like region) with VCP; this interaction occurs in an arsenite-dependent manner and is necessary for the recruitment of the ubiquitin-selective ATPase VCP to stress granules (SGs).

The protein resides in the cytoplasm. The protein localises to the stress granule. Plays a role in the regulation of cytoplasmic stress granules (SGs) turnover. SGs are dynamic and transient cytoplasmic ribonucleoprotein assemblies important for cellular protein homeostasis when protein production is suspended after acute exogenous stress. Associates with SGs and is involved in the efficient and specific arsenite-induced clearance process of SGs through the recruitment of the ubiquitin-selective ATPase VCP and the 26S proteasome. This process requires both complexes for efficient degradation of damaged ubiquitinated SG proteins during recovery from arsenite stress, and hence avoiding aberrant cytoplasmic SGs degradation via autophagy. This chain is AN1-type zinc finger protein 1, found in Homo sapiens (Human).